The sequence spans 402 residues: Calcium-responsive transactivator (402 aa).

The segment at 1–148 (MSVAFASARP…TLPTTSMSLS (148 aa)) is N-terminal auto-inhibitory domain; necessary for interaction with SMARCA4/BRG1. The SH2-binding motif lies at 50 to 53 (YQQI). Disordered regions lie at residues 72–171 (QSLL…VPMQ) and 221–402 (AMMG…NYQQ). The segment covering 85 to 106 (LGPGALSQSGSSQGLHPQGSLS) has biased composition (low complexity). 2 stretches are compositionally biased toward polar residues: residues 128 to 149 (NHVSMQQTAQSTLPTTSMSLSG) and 161 to 171 (SGPTSQSVPMQ). Residues 149–238 (GSGHGTGPGY…GGSMMGQRPM (90 aa)) are methionine-rich intra-molecular domain. The segment covering 233 to 251 (MGQRPMAPYRPSQQGSSQQ) has biased composition (low complexity). Positions 252 to 323 (YLGQEEYYSE…SQYSQQQAGY (72 aa)) are MFD domain. Polar residues predominate over residues 261 to 277 (EQYSHSQGSAEPMSQQY). Residues 296–305 (SYDRSFEDPT) show a composition bias toward basic and acidic residues. Over residues 311-375 (GGNSQYSQQQ…QGQGQQYGSY (65 aa)) the composition is skewed to low complexity. A necessary for nuclear localization region spans residues 340 to 402 (NQQSYPGQQQ…EQGQYGNYQQ (63 aa)). The SH2-binding signature appears at 359–362 (SQYS). Residues 376–388 (RTSQTGPSAQQQR) are compositionally biased toward polar residues. The SH3-binding signature appears at 377–385 (TSQTGPSAQ). The segment covering 390–402 (YGYEQGQYGNYQQ) has biased composition (low complexity). Residues 393-402 (EQGQYGNYQQ) form a necessary for interaction with CREBBP and for the recruitment of CREBBP to the nuclear bodies region. Positions 397–400 (YGNY) match the SH2-binding motif.

It belongs to the SS18 family. In terms of assembly, homodimer. Dimerization may be necessary for its function in neuronal dendritic development. Interacts (via C-terminus) with CREBBP (via N-terminus), EP300 and SMARCA4/BRG1. Interacts with the nBAF complex. Association with CREBBP facilitates transcription while the association with SMARCA4/BRG1 suppresses CREST-mediated transcription in resting neurons.

The protein resides in the nucleus. It is found in the chromosome. Its subcellular location is the centromere. It localises to the kinetochore. In terms of biological role, transcriptional activator which is required for calcium-dependent dendritic growth and branching in cortical neurons. Recruits CREB-binding protein (CREBBP) to nuclear bodies. Component of the CREST-BRG1 complex, a multiprotein complex that regulates promoter activation by orchestrating a calcium-dependent release of a repressor complex and a recruitment of an activator complex. In resting neurons, transcription of the c-FOS promoter is inhibited by BRG1-dependent recruitment of a phospho-RB1-HDAC1 repressor complex. Upon calcium influx, RB1 is dephosphorylated by calcineurin, which leads to release of the repressor complex. At the same time, there is increased recruitment of CREBBP to the promoter by a CREST-dependent mechanism, which leads to transcriptional activation. The CREST-BRG1 complex also binds to the NR2B promoter, and activity-dependent induction of NR2B expression involves a release of HDAC1 and recruitment of CREBBP. This chain is Calcium-responsive transactivator (Ss18l1), found in Mus musculus (Mouse).